The primary structure comprises 104 residues: Small ribosomal subunit protein uS10 (104 aa).

This sequence belongs to the universal ribosomal protein uS10 family. As to quaternary structure, part of the 30S ribosomal subunit.

Involved in the binding of tRNA to the ribosomes. The polypeptide is Small ribosomal subunit protein uS10 (Variovorax paradoxus (strain S110)).